Consider the following 99-residue polypeptide: Small ribosomal subunit protein eS24 (99 aa).

This sequence belongs to the eukaryotic ribosomal protein eS24 family.

The chain is Small ribosomal subunit protein eS24 from Pyrococcus abyssi (strain GE5 / Orsay).